The chain runs to 590 residues: Nuclear receptor subfamily 2 group C member 1 (590 aa).

Residues M1–M166 form a required for interaction with KAT2B region. Residues F98 to C173 constitute a DNA-binding region (nuclear receptor). NR C4-type zinc fingers lie at residues C101–C121 and C137–C156. Residues S185 and S203 each carry the phosphoserine modification. T208 carries the post-translational modification Phosphothreonine. Residue T210 is modified to Phosphothreonine; by MAPK1. Residue K238 forms a Glycyl lysine isopeptide (Lys-Gly) (interchain with G-Cter in SUMO); alternate linkage. Residue K238 forms a Glycyl lysine isopeptide (Lys-Gly) (interchain with G-Cter in SUMO2); alternate linkage. Positions E333 to E577 constitute an NR LBD domain. Phosphoserine; by PKC occurs at positions 461 and 568. Positions P571 to L590 are required for interaction with NRIP1. K575 is covalently cross-linked (Glycyl lysine isopeptide (Lys-Gly) (interchain with G-Cter in SUMO2)).

This sequence belongs to the nuclear hormone receptor family. NR2 subfamily. As to quaternary structure, homodimer. Heterodimer; with NR2C2 which is required for chromatin remodeling and for binding to promoter regions such as globin DR1 repeats. Interacts with ESR1; the interaction prevents homodimerization of ESR1 and suppresses its transcriptional activity and cell growth. Interacts with NRIP1 (via its LXXLL motifs); the interaction provides corepressor activity. Interacts with HDAC3 (via the DNA-binding domain); the interaction recruits phosphorylated NR2C1 to PML bodies for sumoylation. Interacts with HDAC4 (via the DNA-binding domain). Interacts with PIAS1; the interaction is required for sumoylation of NR2C1. Interacts with UBE2I; the interaction is required for sumoylation of NR2C1. Interacts with KAT2B; the interaction acts as a corepressor of gene expression. Post-translationally, sumoylation requires both PIAS1 and UBE2I. Sumoylation appears to dissociate NR2C1 from the PML nuclear bodies. Enhances the interaction with NRIP1 but inhibits interaction with KAT2B. In proliferating cells, stimulation by all-trans retinoic acid, activation of MAPK1-mediated phosphorylation and recruitment to PML bodies with subsequent sumoylation, suppresses OCT4 expression. In terms of processing, phosphorylated on several serine and threonine residues. Phosphorylation on Thr-210, stimulated by all-trans retinoic acid (atRA) mediates PML location and sumoylation in proliferating cells which then modulates its association with effector molecules, KAT2B and NRIP1. Phosphorylation on Ser-568 by PKC is important for protein stability and function as activator of RARB. Isoform 1 is highly expressed in the adlumenal compartment of the seminiferous tubule of adult testes (at protein level) and in the eyes of newborn animals. Weakly expressed in other adult organs including the seminal vesicle, prostate, ovary, adrenal gland, heart, thymus, placenta and brain. Expressed during embryonic stages in developing eyes, brain and cartilage primordia (at protein level). Also expressed in the developing spinal motor neurons and in the sympathetic-, parasympathetic- and sensory ganglia of the embryonic PNS. Expressed in the developing neural epithelia of the inner ear, nasal cavity, tongue and retina. At day 16.5, expressed in various tissues including kidney and intestine. In contrast, isoform 2 is widely expressed at a low level throughout the adult testis.

It is found in the nucleus. Its subcellular location is the PML body. Its function is as follows. Orphan nuclear receptor. Binds the IR7 element in the promoter of its own gene in an autoregulatory negative feedback mechanism. Primarily repressor of a broad range of genes including ESR1 and RARB. Together with NR2C2, forms the core of the DRED (direct repeat erythroid-definitive) complex that represses embryonic and fetal globin transcription. Binds to hormone response elements (HREs) consisting of two 5'-AGGTCA-3' half site direct repeat consensus sequences. Also activator of OCT4 gene expression. Plays a fundamental role in early embryogenesis and regulates embryonic stem cell proliferation and differentiation. Mediator of retinoic acid-regulated preadipocyte proliferation. The polypeptide is Nuclear receptor subfamily 2 group C member 1 (Mus musculus (Mouse)).